Reading from the N-terminus, the 155-residue chain is Effector protein PevD1 (155 aa).

The first 18 residues, 1–18, serve as a signal peptide directing secretion; sequence MQFTLAAAAALFGASALA. Residues 33-148 form the AA1-like domain; it reads NMYENIDIAD…NPTTIVIDSL (116 aa). Disulfide bonds link Cys70-Cys84 and Cys125-Cys135.

Monomer. Interacts with Arabidopsis thaliana NRP.

The protein localises to the secreted. Effector protein. Elicits a hypersensitive response (HR) in tobacco plants (N.tabacum) and cotton (G.hirsutum). Boosts systemic acquired resistance (SAR) to tobacco mosaic virus (TMV) infection in N.tabacum and to V.dhaliae infection in primed cotton seedlings. This is Effector protein PevD1 from Verticillium dahliae (Verticillium wilt).